Reading from the N-terminus, the 384-residue chain is N-acetyldiaminopimelate deacetylase (384 aa).

D73 is a catalytic residue. The active-site Proton acceptor is the E132.

The protein belongs to the peptidase M20A family. N-acetyldiaminopimelate deacetylase subfamily.

It catalyses the reaction N-acetyl-(2S,6S)-2,6-diaminopimelate + H2O = (2S,6S)-2,6-diaminopimelate + acetate. It functions in the pathway amino-acid biosynthesis; L-lysine biosynthesis via DAP pathway; LL-2,6-diaminopimelate from (S)-tetrahydrodipicolinate (acetylase route): step 3/3. Its function is as follows. Catalyzes the conversion of N-acetyl-diaminopimelate to diaminopimelate and acetate. The protein is N-acetyldiaminopimelate deacetylase of Limosilactobacillus fermentum (strain NBRC 3956 / LMG 18251) (Lactobacillus fermentum).